The sequence spans 512 residues: Immunoglobulin delta heavy chain (512 aa).

2 Ig-like domains span residues 1–97 (RLQL…MYYC) and 135–227 (PDVF…KEIF). A variable (V) domain, involved in antigen recognition region spans residues 1–129 (RLQLQESGPG…GQGTTVHVSS (129 aa)). 2 disulfide bridges follow: Cys22–Cys97 and Cys157–Cys213. A constant (C) domain region spans residues 130–512 (APTKAPDVFP…VSYVTDHGPM (383 aa)). Residues 225–296 (EIFRWPESPK…TPECPSHTQP (72 aa)) form a disordered region. Positions 235-247 (AQASSVPTAQPQA) are enriched in polar residues. Ser238 carries an O-linked (GalNAc...) serine glycan. Thr255, Thr256, Thr260, and Thr261 each carry an O-linked (GalNAc...) threonine glycan. Basic and acidic residues predominate over residues 267-287 (GGEEKKKEKEKEEQEERETKT). 2 consecutive Ig-like domains span residues 304–392 (PAVQ…RLMA) and 396–502 (PAAQ…RSLE). 2 cysteine pairs are disulfide-bonded: Cys319-Cys378 and Cys423-Cys484. 3 N-linked (GlcNAc...) asparagine glycosylation sites follow: Asn354, Asn445, and Asn496.

In terms of assembly, immunoglobulins are composed of two identical heavy chains and two identical light chains; disulfide-linked. An IgD molecule contains thus a delta heavy chain combined with either a kappa or a lambda light chains. Kappa light chains are found predominantly on the membrane IgD (mIgD) form and lambda on the secreted IgD (sIgD) form, this fact is poorly understood. Membrane-bound IgD molecules are non-covalently associated with a heterodimer of CD79A and CD79B.

The protein resides in the secreted. The protein localises to the cell membrane. Immunoglobulins, also known as antibodies, are membrane-bound or secreted glycoproteins produced by B lymphocytes. In the recognition phase of humoral immunity, the membrane-bound immunoglobulins serve as receptors which, upon binding of a specific antigen, trigger the clonal expansion and differentiation of B lymphocytes into immunoglobulins-secreting plasma cells. Secreted immunoglobulins mediate the effector phase of humoral immunity, which results in the elimination of bound antigens. The antigen binding site is formed by the variable domain of one heavy chain, together with that of its associated light chain. Thus, each immunoglobulin has two antigen binding sites with remarkable affinity for a particular antigen. The variable domains are assembled by a process called V-(D)-J rearrangement and can then be subjected to somatic hypermutations which, after exposure to antigen and selection, allow affinity maturation for a particular antigen. IgD is the major antigen receptor isotype on the surface of most peripheral B cells, where it is coexpressed with IgM. The membrane-bound IgD (mIgD) induces the phosphorylation of CD79A and CD79B by the Src family of protein tyrosine kinases. Soluble IgD (sIgD) concentration in serum is below those of IgG, IgA, and IgM but much higher than that of IgE. IgM and IgD molecules present on B cells have identical V regions and antigen-binding sites. After the antigen binds to the B cell receptor, the secreted form sIgD is shut off. IgD is a potent inducer of TNF, IL1B, and IL1RN. IgD also induces release of IL6, IL10, and LIF from peripheral blood mononuclear cells. Monocytes seem to be the main producers of cytokines in vitro in the presence of IgD. The chain is Immunoglobulin delta heavy chain from Homo sapiens (Human).